Reading from the N-terminus, the 353-residue chain is Fe(3+) ions import ATP-binding protein FbpC (353 aa).

The ABC transporter domain maps to 9-239 (VTFQNVRKSF…PASSFIADFM (231 aa)). 41-48 (GPSGCGKT) provides a ligand contact to ATP.

The protein belongs to the ABC transporter superfamily. Fe(3+) ion importer (TC 3.A.1.10) family. In terms of assembly, the complex is composed of two ATP-binding proteins (FbpC), two transmembrane proteins (FbpB) and a solute-binding protein (FbpA).

It is found in the cell inner membrane. The catalysed reaction is Fe(3+)(out) + ATP + H2O = Fe(3+)(in) + ADP + phosphate + H(+). In terms of biological role, part of the ABC transporter complex FbpABC involved in Fe(3+) ions import. Responsible for energy coupling to the transport system. The polypeptide is Fe(3+) ions import ATP-binding protein FbpC (Rhizobium etli (strain ATCC 51251 / DSM 11541 / JCM 21823 / NBRC 15573 / CFN 42)).